The following is a 404-amino-acid chain: Photosynthetic reaction center cytochrome c subunit (404 aa).

The first 22 residues, 1–22 (MSPAQQLTLPAVIVVASVMLLG), serve as a signal peptide directing secretion. Residue cysteine 23 is the site of N-palmitoyl cysteine attachment. Residue cysteine 23 is the site of S-diacylglycerol cysteine attachment. Residues methionine 94, cysteine 107, cysteine 110, histidine 111, methionine 130, histidine 144, cysteine 152, cysteine 155, histidine 156, methionine 236, cysteine 247, cysteine 250, histidine 251, cysteine 307, cysteine 310, and histidine 311 each contribute to the heme site. The segment at 346–404 (ASEAAPAAATEAAPEAPAQEVPAAEAVPAAAEPGAAEAAGSVEPAPVEEVAPAPAAQRL) is disordered.

Component of the photosynthetic reaction center composed of protein subunits L (PufL), M (PufM), H (PuhA) and cytochrome C (PufC). The reaction center interacts with light-harvesting antenna complex LH1. Binds 4 heme groups per subunit.

It is found in the cellular chromatophore membrane. The reaction center of purple bacteria contains a tightly bound cytochrome molecule which re-reduces the photo oxidized primary electron donor. In Thermochromatium tepidum (Chromatium tepidum), this protein is Photosynthetic reaction center cytochrome c subunit.